We begin with the raw amino-acid sequence, 320 residues long: Cytochrome f (320 aa).

The signal sequence occupies residues 1-35; it reads MENKNTFSWVKEQMTRSISVSIMIYVITQTSISNA. Residues tyrosine 36, cysteine 56, cysteine 59, and histidine 60 each contribute to the heme site. A helical transmembrane segment spans residues 286–306; sequence VQGLLFFFASVILAQVFLVLK.

The protein belongs to the cytochrome f family. The 4 large subunits of the cytochrome b6-f complex are cytochrome b6, subunit IV (17 kDa polypeptide, petD), cytochrome f and the Rieske protein, while the 4 small subunits are PetG, PetL, PetM and PetN. The complex functions as a dimer. Heme serves as cofactor.

Its subcellular location is the plastid. The protein resides in the chloroplast thylakoid membrane. Its function is as follows. Component of the cytochrome b6-f complex, which mediates electron transfer between photosystem II (PSII) and photosystem I (PSI), cyclic electron flow around PSI, and state transitions. This is Cytochrome f from Lolium perenne (Perennial ryegrass).